We begin with the raw amino-acid sequence, 3977 residues long: Hybrid PKS-NRPS synthetase gkaA (3977 aa).

One can recognise a Ketosynthase family 3 (KS3) domain in the interval 4–441 (EEPIAVIGSG…GTNAHVILEN (438 aa)). Active-site for beta-ketoacyl synthase activity residues include cysteine 177, histidine 316, and histidine 361. The Malonyl-CoA:ACP transacylase (MAT) domain maps to 551–867 (VFTGQGAQWP…TGVIHRGKND (317 aa)). Positions 937-1072 (NPLLGTRTTD…GRITVTLGES (136 aa)) are N-terminal hotdog fold. In terms of domain architecture, PKS/mFAS DH spans 937 to 1241 (NPLLGTRTTD…VVAFSEATAD (305 aa)). Residue histidine 969 is the Proton acceptor; for dehydratase activity of the active site. The tract at residues 1087–1241 (LVSIPQDRFY…VVAFSEATAD (155 aa)) is C-terminal hotdog fold. The Proton donor; for dehydratase activity role is filled by aspartate 1147. The interval 1286 to 1580 (YMKKTVEEFP…FSGIDSSTPE (295 aa)) is methyltransferase (cMeT) domain. Residues 2128–2301 (TYVLFGLTSD…AASILHIGAV (174 aa)) form the Ketoreductase (KR) domain. The 82-residue stretch at 2409–2490 (SEVFEIISGA…QLLEYAIDNM (82 aa)) folds into the Carrier 1 domain. An O-(pantetheine 4'-phosphoryl)serine modification is found at serine 2450. The interval 2497-2542 (HSNGEQGTVSDSGSTNIQLTPASTPSVPSVNLASDSTGSSQVGEDV) is disordered. Positions 2499-2538 (NGEQGTVSDSGSTNIQLTPASTPSVPSVNLASDSTGSSQV) are enriched in polar residues. The interval 2584–3018 (EKIIPMSPGQ…LKDISLFSKE (435 aa)) is condensation. The interval 3048–3437 (IAEHPDTISI…GALEILGRID (390 aa)) is adenylation. The Carrier 2 domain occupies 3552 to 3632 (FSLTPTEDKL…AMASLITPAS (81 aa)). Position 3592 is an O-(pantetheine 4'-phosphoryl)serine (serine 3592). In terms of domain architecture, Thioester reductase (TE) spans 3672–3890 (LTGATGFLGH…FVDLVSVQNV (219 aa)).

It in the C-terminal section; belongs to the NRP synthetase family. Requires pantetheine 4'-phosphate as cofactor.

It participates in mycotoxin biosynthesis. Its function is as follows. Hybrid PKS-NRPS synthetase; part of the gene cluster that mediates the biosynthesis of GKK1032, fungal natural products containing a macrocyclic para-cyclophane connected to a decahydrofluorene ring system that show potent antitumor activities. Within the pathway, the PKS-NRPS gkaA, with the help of the trans-enoyl reductase gkaC, synthesize the polyketide-tyrosyl acyl thioester product which can be reductively off-loaded by the terminal reductase (R) domain in gkaA. The PKS module of gkaA acts in combination with the trans-acting enoyl reductase gkaC to produce a methylated polyketide attached to the ACP domain. In parallel, the adenylation (A) domain of the NRPS module activated L-tyrosine, which is then transferred to the ACP domain. The condensation (C) domain subsequently links this group to the polyketide chain, forming an enzyme-bound amide. The alpha/beta hydrolase gkaG is then required to catalyze the subsequent Knoevenagel condensation that affords the 3-pyrrolin-2-one ring, whereas the three proteins gkaB, gkadX and gkaZ then function synergistically to form the cyclophane. The sequence is that of Hybrid PKS-NRPS synthetase gkaA from Penicillium citrinum.